The sequence spans 527 residues: EGF domain-specific O-linked N-acetylglucosamine transferase (527 aa).

Residues 1–19 form the signal peptide; that stretch reads MLMLLVFGVLLHEVPLSGQ. Positions 295 to 297 match the Required for optimal activity motif; sequence DYD. N-linked (GlcNAc...) asparagine glycosylation occurs at asparagine 354. The Prevents secretion from ER motif lies at 524–527; sequence HDEL.

Belongs to the glycosyltransferase 61 family. Widely expressed. Expressed in brain, heart, kidney, lung, skeletal muscles and thymus. Highest expression is observed in lung and the lowest in skeletal muscles.

The protein localises to the endoplasmic reticulum lumen. It catalyses the reaction L-seryl-[protein] + UDP-N-acetyl-alpha-D-glucosamine = 3-O-(N-acetyl-beta-D-glucosaminyl)-L-seryl-[protein] + UDP + H(+). It carries out the reaction L-threonyl-[protein] + UDP-N-acetyl-alpha-D-glucosamine = 3-O-(N-acetyl-beta-D-glucosaminyl)-L-threonyl-[protein] + UDP + H(+). Catalyzes the transfer of a single N-acetylglucosamine from UDP-GlcNAc to a serine or threonine residue in extracellular proteins resulting in their modification with a beta-linked N-acetylglucosamine (O-GlcNAc). Specifically glycosylates the Thr residue located between the fifth and sixth conserved cysteines of folded EGF-like domains. This chain is EGF domain-specific O-linked N-acetylglucosamine transferase (Eogt), found in Mus musculus (Mouse).